Consider the following 233-residue polypeptide: Histidinol dehydrogenase (233 aa).

Residues serine 31, glutamine 53, and histidine 56 each coordinate substrate. Zn(2+)-binding residues include glutamine 53 and histidine 56. Residues glutamate 121 and histidine 122 each act as proton acceptor in the active site. Substrate is bound by residues histidine 122, aspartate 155, glutamate 209, and histidine 214. Zn(2+) is bound at residue aspartate 155. Residue histidine 214 participates in Zn(2+) binding.

The protein belongs to the histidinol dehydrogenase family. Zn(2+) serves as cofactor.

The enzyme catalyses L-histidinol + 2 NAD(+) + H2O = L-histidine + 2 NADH + 3 H(+). Its pathway is amino-acid biosynthesis; L-histidine biosynthesis; L-histidine from 5-phospho-alpha-D-ribose 1-diphosphate: step 9/9. Functionally, catalyzes the sequential NAD-dependent oxidations of L-histidinol to L-histidinaldehyde and then to L-histidine. In Thiocapsa roseopersicina, this protein is Histidinol dehydrogenase (hisD).